The sequence spans 863 residues: DNA mismatch repair protein MutS 2 (863 aa).

Position 626 to 633 (626 to 633 (GPNMSGKS)) interacts with ATP.

This sequence belongs to the DNA mismatch repair MutS family.

Functionally, this protein is involved in the repair of mismatches in DNA. It is possible that it carries out the mismatch recognition step. This protein has a weak ATPase activity. This Halobacterium salinarum (strain ATCC 700922 / JCM 11081 / NRC-1) (Halobacterium halobium) protein is DNA mismatch repair protein MutS 2 (mutS2).